The following is a 183-amino-acid chain: Ribosome rescue factor SmrB (183 aa).

The 76-residue stretch at 98–173 folds into the Smr domain; it reads LDLHGLTQMQ…GDAALLVLIE (76 aa).

The protein belongs to the SmrB family. In terms of assembly, associates with collided ribosomes, but not with correctly translating polysomes.

Its function is as follows. Acts as a ribosome collision sensor. Detects stalled/collided disomes (pairs of ribosomes where the leading ribosome is stalled and a second ribosome has collided with it) and endonucleolytically cleaves mRNA at the 5' boundary of the stalled ribosome. Stalled/collided disomes form a new interface (primarily via the 30S subunits) that binds SmrB. Cleaved mRNA becomes available for tmRNA ligation, leading to ribosomal subunit dissociation and rescue of stalled ribosomes. The polypeptide is Ribosome rescue factor SmrB (Enterobacter sp. (strain 638)).